A 160-amino-acid chain; its full sequence is Ribosomal RNA large subunit methyltransferase H (160 aa).

Residues Leu-76, Gly-108, and 127 to 132 (LGKMTW) contribute to the S-adenosyl-L-methionine site.

This sequence belongs to the RNA methyltransferase RlmH family. As to quaternary structure, homodimer.

Its subcellular location is the cytoplasm. The enzyme catalyses pseudouridine(1915) in 23S rRNA + S-adenosyl-L-methionine = N(3)-methylpseudouridine(1915) in 23S rRNA + S-adenosyl-L-homocysteine + H(+). Its function is as follows. Specifically methylates the pseudouridine at position 1915 (m3Psi1915) in 23S rRNA. The protein is Ribosomal RNA large subunit methyltransferase H of Rhizobium etli (strain CIAT 652).